Reading from the N-terminus, the 489-residue chain is Dihydropyrimidinase 1 (489 aa).

Zn(2+)-binding residues include His-61, His-63, and Lys-156. An N6-carboxylysine modification is found at Lys-156. A substrate-binding site is contributed by Tyr-161. Zn(2+)-binding residues include His-189 and His-245. Ser-295 contributes to the substrate binding site. Asp-323 serves as a coordination point for Zn(2+). Position 344 (Asn-344) interacts with substrate.

It belongs to the metallo-dependent hydrolases superfamily. Hydantoinase/dihydropyrimidinase family. As to quaternary structure, homotetramer. Zn(2+) serves as cofactor. In terms of processing, carboxylation allows a single lysine to coordinate two zinc ions.

The protein localises to the nucleus. It carries out the reaction 5,6-dihydrouracil + H2O = 3-(carbamoylamino)propanoate + H(+). The polypeptide is Dihydropyrimidinase 1 (dhp-1) (Caenorhabditis briggsae).